Consider the following 114-residue polypeptide: Nucleoid-associated protein MAB_0319 (114 aa).

This sequence belongs to the YbaB/EbfC family. Homodimer.

The protein resides in the cytoplasm. Its subcellular location is the nucleoid. Its function is as follows. Binds to DNA and alters its conformation. May be involved in regulation of gene expression, nucleoid organization and DNA protection. This Mycobacteroides abscessus (strain ATCC 19977 / DSM 44196 / CCUG 20993 / CIP 104536 / JCM 13569 / NCTC 13031 / TMC 1543 / L948) (Mycobacterium abscessus) protein is Nucleoid-associated protein MAB_0319.